A 261-amino-acid chain; its full sequence is ATP synthase subunit a (261 aa).

Residues 1–14 (MSTLSFNNISTEVL) constitute a propeptide, removed in mature form. A run of 7 helical transmembrane segments spans residues 38-58 (ITNI…INLL), 96-116 (IYFP…LIGM), 126-146 (HFVV…ILGF), 153-173 (FFSL…LVLI), 191-211 (ANIL…YNIM), 214-234 (GIIF…FSGL), and 235-255 (ELGI…GYIK).

Belongs to the ATPase A chain family. F-type ATPases have 2 components, CF(1) - the catalytic core - and CF(0) - the membrane proton channel. CF(1) has five subunits: alpha(3), beta(3), gamma(1), delta(1), epsilon(1). CF(0) has three main subunits: a, b and c.

Its subcellular location is the mitochondrion inner membrane. Its function is as follows. Mitochondrial membrane ATP synthase (F(1)F(0) ATP synthase or Complex V) produces ATP from ADP in the presence of a proton gradient across the membrane which is generated by electron transport complexes of the respiratory chain. F-type ATPases consist of two structural domains, F(1) - containing the extramembraneous catalytic core and F(0) - containing the membrane proton channel, linked together by a central stalk and a peripheral stalk. During catalysis, ATP synthesis in the catalytic domain of F(1) is coupled via a rotary mechanism of the central stalk subunits to proton translocation. Key component of the proton channel; it may play a direct role in the translocation of protons across the membrane. This is ATP synthase subunit a (atp-6) from Neurospora crassa (strain ATCC 24698 / 74-OR23-1A / CBS 708.71 / DSM 1257 / FGSC 987).